A 443-amino-acid polypeptide reads, in one-letter code: Xaa-Pro dipeptidase (443 aa).

Aspartate 246, aspartate 257, histidine 339, glutamate 384, and glutamate 423 together coordinate Mn(2+).

Belongs to the peptidase M24B family. Bacterial-type prolidase subfamily. It depends on Mn(2+) as a cofactor.

The enzyme catalyses Xaa-L-Pro dipeptide + H2O = an L-alpha-amino acid + L-proline. In terms of biological role, splits dipeptides with a prolyl residue in the C-terminal position. The chain is Xaa-Pro dipeptidase from Salmonella arizonae (strain ATCC BAA-731 / CDC346-86 / RSK2980).